A 280-amino-acid chain; its full sequence is Ribosomal RNA-processing protein 7 homolog A (280 aa).

Positions 59–159 constitute an RRM domain; that stretch reads RTLFVLNVPP…SGIHKWISDY (101 aa). The residue at position 99 (Ser-99) is a Phosphoserine.

Belongs to the RRP7 family. In terms of assembly, part of the small subunit (SSU) processome, composed of more than 70 proteins and the RNA chaperone small nucleolar RNA (snoRNA) U3. Interacts with NOL6; required for NOL6 localization to nucleolus. Expressed in the apical radial glial cells in the developing brain.

The protein localises to the nucleus. Its subcellular location is the nucleolus. The protein resides in the cell projection. It localises to the cilium. It is found in the cytoplasm. The protein localises to the cytoskeleton. Its subcellular location is the microtubule organizing center. The protein resides in the centrosome. Nucleolar protein that is involved in ribosomal RNA (rRNA) processing. Also plays a role in primary cilia resorption, and cell cycle progression in neurogenesis and neocortex development. Part of the small subunit (SSU) processome, first precursor of the small eukaryotic ribosomal subunit. During the assembly of the SSU processome in the nucleolus, many ribosome biogenesis factors, an RNA chaperone and ribosomal proteins associate with the nascent pre-rRNA and work in concert to generate RNA folding, modifications, rearrangements and cleavage as well as targeted degradation of pre-ribosomal RNA by the RNA exosome. This chain is Ribosomal RNA-processing protein 7 homolog A, found in Homo sapiens (Human).